A 265-amino-acid chain; its full sequence is Cytosolic Fe-S cluster assembly factor NUBP2 homolog (265 aa).

22–29 is an ATP binding site; the sequence is GKGGVGKS. Residues cysteine 196 and cysteine 199 each contribute to the [4Fe-4S] cluster site.

This sequence belongs to the Mrp/NBP35 ATP-binding proteins family. NUBP2/CFD1 subfamily. Heterotetramer of 2 NUBP1 and 2 NUBP2 chains. The cofactor is [4Fe-4S] cluster.

The protein localises to the cytoplasm. Its function is as follows. Component of the cytosolic iron-sulfur (Fe/S) protein assembly (CIA) machinery. Required for maturation of extramitochondrial Fe-S proteins. The NUBP1-NUBP2 heterotetramer forms a Fe-S scaffold complex, mediating the de novo assembly of an Fe-S cluster and its transfer to target apoproteins. In Trichoplax adhaerens (Trichoplax reptans), this protein is Cytosolic Fe-S cluster assembly factor NUBP2 homolog.